We begin with the raw amino-acid sequence, 441 residues long: Endoglucanase E-2 (441 aa).

A signal peptide (tat-type signal) is located at residues 1 to 31 (MSPRPLRALLGAAAAALVSAAALAFPSQAAA). The segment at 32-320 (NDSPFYVNPN…YEMAIAAGGT (289 aa)) is catalytic. Aspartate 110 is a catalytic residue. 2 disulfides stabilise this stretch: cysteine 111–cysteine 156 and cysteine 263–cysteine 298. The Proton donor role is filled by aspartate 148. The active-site Nucleophile is the aspartate 296. A disordered region spans residues 317-343 (AGGTNPNPNPNPTPTPTPTPTPPPGSS). The tract at residues 321–340 (NPNPNPNPTPTPTPTPTPPP) is linker. A compositionally biased stretch (pro residues) spans 323–341 (NPNPNPTPTPTPTPTPPPG). Positions 339-441 (PPGSSGACTA…SVPTLTCAAS (103 aa)) constitute a CBM2 domain. An intrachain disulfide couples cysteine 346 to cysteine 438.

This sequence belongs to the glycosyl hydrolase 6 (cellulase B) family. Homodimer. Predicted to be exported by the Tat system. The position of the signal peptide cleavage has been experimentally proven.

It catalyses the reaction Endohydrolysis of (1-&gt;4)-beta-D-glucosidic linkages in cellulose, lichenin and cereal beta-D-glucans.. It functions in the pathway glycan metabolism; cellulose degradation. The polypeptide is Endoglucanase E-2 (celB) (Thermobifida fusca (Thermomonospora fusca)).